Reading from the N-terminus, the 205-residue chain is Glycerol-3-phosphate acyltransferase (205 aa).

A run of 5 helical transmembrane segments spans residues 4–24, 80–100, 107–127, 130–150, and 155–175; these read IAPG…AILV, PFWL…PVFF, GVAT…GVMA, WLLT…SALI, and VWWF…LILL.

This sequence belongs to the PlsY family. In terms of assembly, probably interacts with PlsX.

The protein resides in the cell inner membrane. The catalysed reaction is an acyl phosphate + sn-glycerol 3-phosphate = a 1-acyl-sn-glycero-3-phosphate + phosphate. It functions in the pathway lipid metabolism; phospholipid metabolism. Its function is as follows. Catalyzes the transfer of an acyl group from acyl-phosphate (acyl-PO(4)) to glycerol-3-phosphate (G3P) to form lysophosphatidic acid (LPA). This enzyme utilizes acyl-phosphate as fatty acyl donor, but not acyl-CoA or acyl-ACP. The sequence is that of Glycerol-3-phosphate acyltransferase from Klebsiella pneumoniae (strain 342).